Reading from the N-terminus, the 288-residue chain is Proteasome subunit beta (288 aa).

Positions 1–57 (MTAGDPMRLHPGHALSSFTEHLRALAPELLGPNRFAALDGATGSSGGTGAKDIAPHG) are cleaved as a propeptide — removed in mature form; by autocatalysis. Thr-58 serves as the catalytic Nucleophile.

Belongs to the peptidase T1B family. As to quaternary structure, the 20S proteasome core is composed of 14 alpha and 14 beta subunits that assemble into four stacked heptameric rings, resulting in a barrel-shaped structure. The two inner rings, each composed of seven catalytic beta subunits, are sandwiched by two outer rings, each composed of seven alpha subunits. The catalytic chamber with the active sites is on the inside of the barrel. Has a gated structure, the ends of the cylinder being occluded by the N-termini of the alpha-subunits. Is capped by the proteasome-associated ATPase, ARC.

The protein resides in the cytoplasm. It carries out the reaction Cleavage of peptide bonds with very broad specificity.. Its pathway is protein degradation; proteasomal Pup-dependent pathway. The formation of the proteasomal ATPase ARC-20S proteasome complex, likely via the docking of the C-termini of ARC into the intersubunit pockets in the alpha-rings, may trigger opening of the gate for substrate entry. Interconversion between the open-gate and close-gate conformations leads to a dynamic regulation of the 20S proteasome proteolysis activity. Its function is as follows. Component of the proteasome core, a large protease complex with broad specificity involved in protein degradation. This is Proteasome subunit beta from Nocardia farcinica (strain IFM 10152).